Reading from the N-terminus, the 940-residue chain is Serine/threonine-protein kinase PLK4 (940 aa).

Residues 12–265 (FKVLTLLGKG…LSAVLDHPFM (254 aa)) enclose the Protein kinase domain. ATP contacts are provided by residues 18–26 (LGKGSFACV) and Lys41. Catalysis depends on Asp136, which acts as the Proton acceptor. 2 disordered regions span residues 262–353 (HPFM…DLSR) and 409–529 (RLFP…DAFV). The span at 273–305 (SKDSGSSNGGSIDSGIATISTASNATNNSSSSR) shows a compositional bias: low complexity. Polar residues-rich tracts occupy residues 337 to 349 (FKSGQDWQPNSQD), 440 to 465 (NPASSFSTSTHSTRQQMPDSQTQPWF), and 494 to 519 (GTQTSCSDKPSGLHSQQQPILFQHNN). The region spanning 563–676 (CLKKSFPPLC…TKFVQLVKSK (114 aa)) is the Cryptic POLO box 1 (CPB1) domain. A Cryptic POLO box 2 (CPB2) domain is found at 677 to 791 (TPKVTLYTKF…GRRPVNPVPP (115 aa)). A POLO box domain is found at 857–935 (KVLKSIFVPN…LSSILGLLAN (79 aa)).

Belongs to the protein kinase superfamily. Ser/Thr protein kinase family. CDC5/Polo subfamily. Homodimer. Ubiquitinated; leading to its degradation by the proteasome.

Its subcellular location is the cytoplasm. It localises to the cytoskeleton. The protein localises to the microtubule organizing center. The protein resides in the centrosome. It is found in the centriole. It carries out the reaction L-seryl-[protein] + ATP = O-phospho-L-seryl-[protein] + ADP + H(+). The catalysed reaction is L-threonyl-[protein] + ATP = O-phospho-L-threonyl-[protein] + ADP + H(+). Its function is as follows. Serine/threonine-protein kinase that plays a central role in centriole duplication. Able to trigger procentriole formation on the surface of the parental centriole cylinder, leading to the recruitment of centriole biogenesis proteins such as sass6, cpap, ccp110, cep135 and gamma-tubulin. When overexpressed, it is able to induce centrosome amplification through the simultaneous generation of multiple procentrioles adjoining each parental centriole during S phase. Its central role in centriole replication suggests a possible role in tumorigenesis, centrosome aberrations being frequently observed in tumors. Also involved in deuterosome-mediated centriole amplification in multiciliated that can generate more than 100 centrioles. This Danio rerio (Zebrafish) protein is Serine/threonine-protein kinase PLK4.